We begin with the raw amino-acid sequence, 241 residues long: Glucosamine-6-phosphate deaminase (241 aa).

Aspartate 67 acts as the Proton acceptor; for enolization step in catalysis. Catalysis depends on asparagine 136, which acts as the For ring-opening step. Histidine 138 (proton acceptor; for ring-opening step) is an active-site residue. Glutamate 143 (for ring-opening step) is an active-site residue.

The protein belongs to the glucosamine/galactosamine-6-phosphate isomerase family. NagB subfamily.

It catalyses the reaction alpha-D-glucosamine 6-phosphate + H2O = beta-D-fructose 6-phosphate + NH4(+). It participates in amino-sugar metabolism; N-acetylneuraminate degradation; D-fructose 6-phosphate from N-acetylneuraminate: step 5/5. Its function is as follows. Catalyzes the reversible isomerization-deamination of glucosamine 6-phosphate (GlcN6P) to form fructose 6-phosphate (Fru6P) and ammonium ion. The polypeptide is Glucosamine-6-phosphate deaminase (Halothermothrix orenii (strain H 168 / OCM 544 / DSM 9562)).